The following is a 207-amino-acid chain: Early nodulin-like protein 11 (207 aa).

The N-terminal stretch at 1–24 (MVSLISIVSVVFLLFTTFYHFGEA) is a signal peptide. The 106-residue stretch at 25-130 (RIINVGGSLD…GEKVTVVVQS (106 aa)) folds into the Phytocyanin domain. Asparagine 43 carries N-linked (GlcNAc...) asparagine glycosylation. Cysteine 83 and cysteine 118 form a disulfide bridge. A disordered region spans residues 129 to 179 (QSPNHPKPGPAAVTPTLPPKPSTTPAAPAPAPPTPSPKSSTSTMAPAPAPA). Residues 144–164 (TLPPKPSTTPAAPAPAPPTPS) show a composition bias toward pro residues. Over residues 165-179 (PKSSTSTMAPAPAPA) the composition is skewed to low complexity. The GPI-anchor amidated serine moiety is linked to residue serine 181. Positions 182–207 (SAVGLVAGNGIFWASTLVAVIGLAFA) are cleaved as a propeptide — removed in mature form.

This sequence belongs to the early nodulin-like (ENODL) family. As to expression, confined to flowers and siliques.

It localises to the cell membrane. Functionally, may act as a carbohydrate transporter. Required, together with ENODL11, ENODL12, ENODL13, ENODL14 and ENODL15, for male-female communication and pollen tube reception and burst at the synergid cell surface of the female gametophyte. The protein is Early nodulin-like protein 11 of Arabidopsis thaliana (Mouse-ear cress).